Reading from the N-terminus, the 76-residue chain is Small ribosomal subunit protein eS17 (76 aa).

This sequence belongs to the eukaryotic ribosomal protein eS17 family.

The chain is Small ribosomal subunit protein eS17 from Picrophilus torridus (strain ATCC 700027 / DSM 9790 / JCM 10055 / NBRC 100828 / KAW 2/3).